Here is a 425-residue protein sequence, read N- to C-terminus: MFKDYAKIHVKAGDGGNGCVAFRREKYVPYGGPSGGDGGRGGHVILRADGGLRTLVDFRYRTHYKAGRGTHGQGKNMHGRKGEDLVLRVPVGTEVRRAGDATLMADLTVDGQEYRVARGGRGGRGNARFAAANRRAPSFAEKGEPGEELWLELELKLLADVGLVGFPNAGKSTIISKVSAARPKIADYPFTTLEPHLGVVRVGEGESFVLADIPGLIEGAHRGAGLGHRFLRHVERTRVLIHVVDVSGREGRDPVADFEAINRELAAYDPRLAARPQLVAANKTDLPGARDNARRLAEAAGGRYEVFEISALTGEGLDRLIYRTYRLLETIPVEPAPAPIVPDERETDVTLFLVAREGNTYVVEGEGIERRVAMTDLDNPEAVQHLQELLVRIGVEDALRAEGIRPGDNVRIGRFEFEYSENPTG.

One can recognise an Obg domain in the interval 1 to 158; sequence MFKDYAKIHV…LWLELELKLL (158 aa). Positions 159–329 constitute an OBG-type G domain; it reads ADVGLVGFPN…LIYRTYRLLE (171 aa). GTP contacts are provided by residues 165-172, 190-194, 212-215, 282-285, and 310-312; these read GFPNAGKS, FTTLE, DIPG, NKTD, and SAL. The Mg(2+) site is built by Ser172 and Thr192. Residues 341–421 enclose the OCT domain; sequence VPDERETDVT…IGRFEFEYSE (81 aa).

It belongs to the TRAFAC class OBG-HflX-like GTPase superfamily. OBG GTPase family. Monomer. The cofactor is Mg(2+).

The protein localises to the cytoplasm. Functionally, an essential GTPase which binds GTP, GDP and possibly (p)ppGpp with moderate affinity, with high nucleotide exchange rates and a fairly low GTP hydrolysis rate. Plays a role in control of the cell cycle, stress response, ribosome biogenesis and in those bacteria that undergo differentiation, in morphogenesis control. The chain is GTPase Obg from Desulforudis audaxviator (strain MP104C).